The following is a 669-amino-acid chain: Probable tail fiber protein (669 aa).

Positions 251 to 272 are disordered; it reads KAPLNSPALTGTPTTPTARQGT.

Belongs to the tail fiber family.

It is found in the virion. The protein is Probable tail fiber protein (H) of Escherichia phage P2 (Bacteriophage P2).